The primary structure comprises 440 residues: Xylose isomerase (440 aa).

Catalysis depends on residues His101 and Asp104. Mg(2+) is bound by residues Glu232, Glu268, His271, Asp296, Asp307, Asp309, and Asp339.

Belongs to the xylose isomerase family. Homotetramer. Mg(2+) serves as cofactor.

It localises to the cytoplasm. It carries out the reaction alpha-D-xylose = alpha-D-xylulofuranose. This chain is Xylose isomerase, found in Cronobacter sakazakii (strain ATCC BAA-894) (Enterobacter sakazakii).